The sequence spans 400 residues: Methylthioribose kinase (400 aa).

ATP contacts are provided by residues N44, K61, and 115 to 117 (EDL). D233 is a binding site for substrate. Residue 250-252 (DPE) coordinates ATP. R340 lines the substrate pocket.

The protein belongs to the methylthioribose kinase family. In terms of assembly, homodimer.

The enzyme catalyses 5-(methylsulfanyl)-D-ribose + ATP = 5-(methylsulfanyl)-alpha-D-ribose 1-phosphate + ADP + H(+). It functions in the pathway amino-acid biosynthesis; L-methionine biosynthesis via salvage pathway; S-methyl-5-thio-alpha-D-ribose 1-phosphate from S-methyl-5'-thioadenosine (hydrolase route): step 2/2. Its function is as follows. Catalyzes the phosphorylation of methylthioribose into methylthioribose-1-phosphate. This chain is Methylthioribose kinase, found in Geobacillus sp. (strain WCH70).